The sequence spans 111 residues: Ribosome-binding factor A (111 aa).

The protein belongs to the RbfA family. Monomer. Binds 30S ribosomal subunits, but not 50S ribosomal subunits or 70S ribosomes.

It is found in the cytoplasm. In terms of biological role, one of several proteins that assist in the late maturation steps of the functional core of the 30S ribosomal subunit. Associates with free 30S ribosomal subunits (but not with 30S subunits that are part of 70S ribosomes or polysomes). Required for efficient processing of 16S rRNA. May interact with the 5'-terminal helix region of 16S rRNA. This chain is Ribosome-binding factor A, found in Helicobacter pylori (strain ATCC 700392 / 26695) (Campylobacter pylori).